We begin with the raw amino-acid sequence, 87 residues long: Small ribosomal subunit protein uS17 (87 aa).

The protein belongs to the universal ribosomal protein uS17 family. Part of the 30S ribosomal subunit.

One of the primary rRNA binding proteins, it binds specifically to the 5'-end of 16S ribosomal RNA. In Bacillus cereus (strain ATCC 14579 / DSM 31 / CCUG 7414 / JCM 2152 / NBRC 15305 / NCIMB 9373 / NCTC 2599 / NRRL B-3711), this protein is Small ribosomal subunit protein uS17.